Consider the following 512-residue polypeptide: Probable cytochrome P450 6d2 (512 aa).

Position 457 (Cys457) interacts with heme.

It belongs to the cytochrome P450 family. The cofactor is heme.

It is found in the endoplasmic reticulum membrane. The protein resides in the microsome membrane. In terms of biological role, may be involved in the metabolism of insect hormones and in the breakdown of synthetic insecticides. This Drosophila melanogaster (Fruit fly) protein is Probable cytochrome P450 6d2 (Cyp6d2).